The sequence spans 513 residues: Histidine ammonia-lyase (513 aa).

The 5-imidazolinone (Ala-Gly) cross-link spans 142–144 (ASG). A 2,3-didehydroalanine (Ser) modification is found at serine 143.

It belongs to the PAL/histidase family. Contains an active site 4-methylidene-imidazol-5-one (MIO), which is formed autocatalytically by cyclization and dehydration of residues Ala-Ser-Gly.

It localises to the cytoplasm. The enzyme catalyses L-histidine = trans-urocanate + NH4(+). It participates in amino-acid degradation; L-histidine degradation into L-glutamate; N-formimidoyl-L-glutamate from L-histidine: step 1/3. In Methylobacterium sp. (strain 4-46), this protein is Histidine ammonia-lyase.